The sequence spans 433 residues: Monodehydroascorbate reductase (433 aa).

Residues 12–15 (GGVS), E39, R46, K51, I94, and 145–146 (RE) each bind FAD. Residues 170–176 (GGYIGLE), E194, R200, and G259 each bind NAD(+). NADP(+) is bound at residue 172–176 (YIGLE). NADP(+)-binding residues include R200 and G259. D296 serves as a coordination point for FAD. 312 to 313 (EH) contributes to the NAD(+) binding site. Residue 312–313 (EH) coordinates NADP(+). Position 314 (V314) interacts with FAD. R318 is an L-ascorbate binding site. FAD is bound at residue Y347. Y347 contributes to the NAD(+) binding site. NADP(+) is bound at residue Y347. R349 serves as a coordination point for L-ascorbate.

This sequence belongs to the FAD-dependent oxidoreductase family. Requires FAD as cofactor. As to expression, expressed at relatively low levels in all tissues examined.

It localises to the cytoplasm. The catalysed reaction is 2 monodehydro-L-ascorbate radical + NADH + H(+) = 2 L-ascorbate + NAD(+). Functionally, catalyzes the conversion of monodehydroascorbate to ascorbate, oxidizing NADH in the process. The protein is Monodehydroascorbate reductase of Pisum sativum (Garden pea).